We begin with the raw amino-acid sequence, 570 residues long: Urease subunit alpha (570 aa).

The Urease domain occupies 131 to 570; it reads GGFDSHIHFI…LPLAQRYFMF (440 aa). Ni(2+) is bound by residues histidine 136, histidine 138, and lysine 219. Lysine 219 carries the N6-carboxylysine modification. Residue histidine 221 coordinates substrate. Histidine 248 and histidine 274 together coordinate Ni(2+). Histidine 322 acts as the Proton donor in catalysis. Aspartate 362 contacts Ni(2+).

It belongs to the metallo-dependent hydrolases superfamily. Urease alpha subunit family. In terms of assembly, heterotrimer of UreA (gamma), UreB (beta) and UreC (alpha) subunits. Three heterotrimers associate to form the active enzyme. The cofactor is Ni cation. In terms of processing, carboxylation allows a single lysine to coordinate two nickel ions.

The protein resides in the cytoplasm. It carries out the reaction urea + 2 H2O + H(+) = hydrogencarbonate + 2 NH4(+). Its pathway is nitrogen metabolism; urea degradation; CO(2) and NH(3) from urea (urease route): step 1/1. The polypeptide is Urease subunit alpha (Rhodopseudomonas palustris (strain ATCC BAA-98 / CGA009)).